The primary structure comprises 434 residues: Cyclic 2,3-diphosphoglycerate synthetase (434 aa).

The protein belongs to the cyclic 2,3-diphosphoglycerate synthetase family.

The protein localises to the cytoplasm. The enzyme catalyses (2R)-2,3-bisphosphoglycerate + ATP + H(+) = cyclic (2R)-2,3-bisphosphoglycerate + ADP + phosphate. In terms of biological role, catalyzes the formation of cyclic 2,3-diphosphoglycerate (cDPG) by formation of an intramolecular phosphoanhydride bond at the expense of ATP. In Thermococcus sibiricus (strain DSM 12597 / MM 739), this protein is Cyclic 2,3-diphosphoglycerate synthetase.